The chain runs to 436 residues: 3-ketoacyl-CoA thiolase (436 aa).

Cys99 (acyl-thioester intermediate) is an active-site residue. Active-site proton acceptor residues include His392 and Cys422.

It belongs to the thiolase-like superfamily. Thiolase family. Heterotetramer of two alpha chains (FadJ) and two beta chains (FadI).

The protein resides in the cytoplasm. The catalysed reaction is an acyl-CoA + acetyl-CoA = a 3-oxoacyl-CoA + CoA. Its pathway is lipid metabolism; fatty acid beta-oxidation. Its function is as follows. Catalyzes the final step of fatty acid oxidation in which acetyl-CoA is released and the CoA ester of a fatty acid two carbons shorter is formed. This is 3-ketoacyl-CoA thiolase from Shewanella piezotolerans (strain WP3 / JCM 13877).